A 219-amino-acid chain; its full sequence is VQ motif-containing protein 19 (219 aa).

A VQ motif is present at residues 47 to 56 (FKQVVQMLTG). The tract at residues 52-94 (QMLTGSSSPRSPDSPRPPTTPSGKGNFVIPPIKTAQPKKHSGN) is disordered. Phosphoserine is present on residues Ser-59, Ser-65, Ser-127, Ser-131, Ser-139, Ser-141, and Ser-152. Thr-155 is modified (phosphothreonine). Disordered stretches follow at residues 156 to 177 (PLKQ…PLSE) and 190 to 219 (HRSP…SPEM). Phosphoserine is present on residues Ser-192 and Ser-195. Phosphothreonine occurs at positions 196 and 211. A phosphoserine mark is found at Ser-212 and Ser-216.

Phosphorylated on serine and threonine residues by MPK6.

The protein localises to the nucleus. In terms of biological role, may modulate WRKY transcription factor activities. The chain is VQ motif-containing protein 19 from Arabidopsis thaliana (Mouse-ear cress).